The primary structure comprises 871 residues: DNA mismatch repair protein MutS (871 aa).

620-627 (GPNMGGKS) contacts ATP. A disordered region spans residues 806 to 837 (HHGGLNEPKQATMELTPPPEAIPSHTEKRNPL).

Belongs to the DNA mismatch repair MutS family.

This protein is involved in the repair of mismatches in DNA. It is possible that it carries out the mismatch recognition step. This protein has a weak ATPase activity. The sequence is that of DNA mismatch repair protein MutS from Idiomarina loihiensis (strain ATCC BAA-735 / DSM 15497 / L2-TR).